A 366-amino-acid polypeptide reads, in one-letter code: 3-dehydroquinate synthase (366 aa).

NAD(+) is bound by residues 71–76 (DGEKYK), 105–109 (GVIGD), 129–130 (TT), K142, K151, and 169–172 (TLQT). Zn(2+) is bound by residues E184, H247, and H264.

The protein belongs to the sugar phosphate cyclases superfamily. Dehydroquinate synthase family. It depends on Co(2+) as a cofactor. Zn(2+) serves as cofactor. The cofactor is NAD(+).

Its subcellular location is the cytoplasm. The enzyme catalyses 7-phospho-2-dehydro-3-deoxy-D-arabino-heptonate = 3-dehydroquinate + phosphate. Its pathway is metabolic intermediate biosynthesis; chorismate biosynthesis; chorismate from D-erythrose 4-phosphate and phosphoenolpyruvate: step 2/7. Catalyzes the conversion of 3-deoxy-D-arabino-heptulosonate 7-phosphate (DAHP) to dehydroquinate (DHQ). The protein is 3-dehydroquinate synthase of Actinobacillus pleuropneumoniae serotype 5b (strain L20).